Reading from the N-terminus, the 347-residue chain is Dihydroorotase (347 aa).

2 residues coordinate Zn(2+): His17 and His19. Substrate is bound by residues 19–21 (HLR) and Asn45. Zn(2+)-binding residues include Lys103, His140, and His178. Lys103 is subject to N6-carboxylysine. His140 is a binding site for substrate. Substrate is bound at residue Leu223. Asp251 contacts Zn(2+). Asp251 is an active-site residue. Substrate is bound by residues His255 and Ala267.

The protein belongs to the metallo-dependent hydrolases superfamily. DHOase family. Class II DHOase subfamily. As to quaternary structure, homodimer. Zn(2+) serves as cofactor.

The catalysed reaction is (S)-dihydroorotate + H2O = N-carbamoyl-L-aspartate + H(+). Its pathway is pyrimidine metabolism; UMP biosynthesis via de novo pathway; (S)-dihydroorotate from bicarbonate: step 3/3. Its function is as follows. Catalyzes the reversible cyclization of carbamoyl aspartate to dihydroorotate. This is Dihydroorotase from Pectobacterium atrosepticum (strain SCRI 1043 / ATCC BAA-672) (Erwinia carotovora subsp. atroseptica).